The chain runs to 588 residues: Pre-mRNA-splicing ATP-dependent RNA helicase PRP28 (588 aa).

Residues 15–94 (NKKKGLDENT…PSKQNGSKFH (80 aa)) form a disordered region. Composition is skewed to basic and acidic residues over residues 35–49 (NKQERSKQERLKENE) and 60–83 (AKVEIKKVNSRDDSFFNETNDKKR). Ser69 carries the phosphoserine modification. The short motif at 172–202 (RNWEELNIIPRDLLRVIIQELRFPSPTPIQR) is the Q motif element. The Helicase ATP-binding domain maps to 208–399 (VCNMKQYRDF…AGYMQKPVYA (192 aa)). Residue 221 to 228 (ASTGSGKT) coordinates ATP. The short motif at 341-344 (DEAD) is the DEAD box element. Residues 427-579 (KLKPIVAKYD…EAVKNKYNVG (153 aa)) enclose the Helicase C-terminal domain.

It belongs to the DEAD box helicase family. DDX23/PRP28 subfamily. Component of the U5 snRNP complex, composed of at least BRR2, PRP8, PRP28, DIB1, LIN1, SMB1, SMD1, SMD2, SMD3, SME1, SMX2, SMX3, and SNU114, associated with the U5 snRNA.

The protein localises to the cytoplasm. It localises to the nucleus. It catalyses the reaction ATP + H2O = ADP + phosphate + H(+). Functionally, ATP-dependent RNA helicase involved in mRNA splicing. May destabilize the U1/5'-splice site duplex to permit an effective competition for the 5'-splice site by the U6 snRNA, resulting in the switch between U1 and U6 at the 5'-splice site. May also act to unwind the U4/U6 base-pairing interaction in the U4/U6/U5 snRNP, facilitating the first covalent step of splicing. This is Pre-mRNA-splicing ATP-dependent RNA helicase PRP28 (PRP28) from Saccharomyces cerevisiae (strain ATCC 204508 / S288c) (Baker's yeast).